The following is a 156-amino-acid chain: MRTYDDTFSGQRIYPGKGKLYVRGDSKIFRFQNGKSESLFLQRKNPRRIAWTVLYRRQHKKGISEEVAKKRSRRTVKAQRAIVGASLEVIKERRSMRPEARSAARLAAIKESKAKKQETQAAKKAEKAKNAANPKARVTSKQGAKGAPVKVAAKSR.

Positions 110–129 (KESKAKKQETQAAKKAEKAK) are enriched in basic and acidic residues. The segment at 110–156 (KESKAKKQETQAAKKAEKAKNAANPKARVTSKQGAKGAPVKVAAKSR) is disordered. The span at 130 to 156 (NAANPKARVTSKQGAKGAPVKVAAKSR) shows a compositional bias: low complexity.

Belongs to the eukaryotic ribosomal protein eL24 family. In terms of assembly, component of the large ribosomal subunit (LSU). Mature N.crassa ribosomes consist of a small (40S) and a large (60S) subunit. The 40S small subunit contains 1 molecule of ribosomal RNA (18S rRNA) and at least 32 different proteins. The large 60S subunit contains 3 rRNA molecules (26S, 5.8S and 5S rRNA) and at least 42 different proteins.

It localises to the cytoplasm. Its function is as follows. Component of the ribosome, a large ribonucleoprotein complex responsible for the synthesis of proteins in the cell. The small ribosomal subunit (SSU) binds messenger RNAs (mRNAs) and translates the encoded message by selecting cognate aminoacyl-transfer RNA (tRNA) molecules. The large subunit (LSU) contains the ribosomal catalytic site termed the peptidyl transferase center (PTC), which catalyzes the formation of peptide bonds, thereby polymerizing the amino acids delivered by tRNAs into a polypeptide chain. The nascent polypeptides leave the ribosome through a tunnel in the LSU and interact with protein factors that function in enzymatic processing, targeting, and the membrane insertion of nascent chains at the exit of the ribosomal tunnel. This is Large ribosomal subunit protein eL24 (rpl-24) from Neurospora crassa (strain ATCC 24698 / 74-OR23-1A / CBS 708.71 / DSM 1257 / FGSC 987).